We begin with the raw amino-acid sequence, 372 residues long: Alpha-1-antitrypsin homolog (372 aa).

The first 19 residues, 1–19 (MPATCLLHTMLTLPSPSTR), serve as a signal peptide directing secretion. N-linked (GlcNAc...) asparagine glycans are attached at residues Asn-214 and Asn-226. The interval 328–347 (AATTIEIMPMSLPDTVILNR) is RCL.

It belongs to the serpin family.

Its subcellular location is the secreted. The chain is Alpha-1-antitrypsin homolog from Cyprinus carpio (Common carp).